Here is a 204-residue protein sequence, read N- to C-terminus: Small ribosomal subunit protein uS4 (204 aa).

Residues 20–46 form a disordered region; it reads WGRPKSPINKREYGPGEHGQRRRKPSD. Positions 28–38 are enriched in basic and acidic residues; it reads NKREYGPGEHG. In terms of domain architecture, S4 RNA-binding spans 93 to 156; the sequence is TRLDAVVYRM…RQMPLILEAL (64 aa).

This sequence belongs to the universal ribosomal protein uS4 family. As to quaternary structure, part of the 30S ribosomal subunit. Contacts protein S5. The interaction surface between S4 and S5 is involved in control of translational fidelity.

One of the primary rRNA binding proteins, it binds directly to 16S rRNA where it nucleates assembly of the body of the 30S subunit. Functionally, with S5 and S12 plays an important role in translational accuracy. The protein is Small ribosomal subunit protein uS4 of Rhodospirillum rubrum (strain ATCC 11170 / ATH 1.1.1 / DSM 467 / LMG 4362 / NCIMB 8255 / S1).